Here is a 252-residue protein sequence, read N- to C-terminus: 3-deoxy-manno-octulosonate cytidylyltransferase (252 aa).

It belongs to the KdsB family.

The protein resides in the cytoplasm. The catalysed reaction is 3-deoxy-alpha-D-manno-oct-2-ulosonate + CTP = CMP-3-deoxy-beta-D-manno-octulosonate + diphosphate. The protein operates within nucleotide-sugar biosynthesis; CMP-3-deoxy-D-manno-octulosonate biosynthesis; CMP-3-deoxy-D-manno-octulosonate from 3-deoxy-D-manno-octulosonate and CTP: step 1/1. It participates in bacterial outer membrane biogenesis; lipopolysaccharide biosynthesis. Functionally, activates KDO (a required 8-carbon sugar) for incorporation into bacterial lipopolysaccharide in Gram-negative bacteria. The protein is 3-deoxy-manno-octulosonate cytidylyltransferase of Thiobacillus denitrificans (strain ATCC 25259 / T1).